Here is a 468-residue protein sequence, read N- to C-terminus: Tissue alpha-L-fucosidase (468 aa).

A signal peptide spans 1-29; the sequence is MRAPGERWRPAGAALWLLLLLLLLGATES. Position 172 is a phosphothreonine (T172). 3 N-linked (GlcNAc...) asparagine glycosylation sites follow: N243, N270, and N384.

It belongs to the glycosyl hydrolase 29 family. In terms of assembly, homotetramer.

It localises to the lysosome. The enzyme catalyses an alpha-L-fucoside + H2O = L-fucose + an alcohol. It carries out the reaction a neolactoside IV(2)-alpha-Fuc-nLc4Cer(d18:1(4E)) + H2O = a neolactoside nLc4Cer(d18:1(4E)) + L-fucose. It catalyses the reaction a neolactoside IV(2)-alpha-Fuc-nLc4Cer(d18:0) + H2O = a neolactoside nLc4Cer(d18:0) + L-fucose. Functionally, alpha-L-fucosidase is responsible for hydrolyzing the alpha-1,6-linked fucose joined to the reducing-end N-acetylglucosamine of the carbohydrate moieties of glycoproteins. In Macaca fascicularis (Crab-eating macaque), this protein is Tissue alpha-L-fucosidase (FUCA1).